The chain runs to 200 residues: Molybdopterin synthase catalytic subunit (200 aa).

Residues 16–30 are compositionally biased toward polar residues; it reads KLPSSHQSVEDSASE. A disordered region spans residues 16–43; the sequence is KLPSSHQSVEDSASEPSGYEAKDPPQDT. S20 carries the post-translational modification Phosphoserine. Residues 154-155, K170, and 177-179 contribute to the substrate site; these read HR and KKE.

The protein belongs to the MoaE family. MOCS2B subfamily. Heterotetramer; composed of 2 small (MOCS2A) and 2 large (MOCS2B) subunits.

It localises to the cytoplasm. The protein localises to the cytosol. The enzyme catalyses 2 [molybdopterin-synthase sulfur-carrier protein]-C-terminal-Gly-aminoethanethioate + cyclic pyranopterin phosphate + H2O = molybdopterin + 2 [molybdopterin-synthase sulfur-carrier protein]-C-terminal Gly-Gly + 2 H(+). It participates in cofactor biosynthesis; molybdopterin biosynthesis. In terms of biological role, catalytic subunit of the molybdopterin synthase complex, a complex that catalyzes the conversion of precursor Z into molybdopterin. Acts by mediating the incorporation of 2 sulfur atoms from thiocarboxylated MOCS2A into precursor Z to generate a dithiolene group. The polypeptide is Molybdopterin synthase catalytic subunit (Rattus norvegicus (Rat)).